A 322-amino-acid chain; its full sequence is Olfactory receptor 1J1 (322 aa).

The Extracellular portion of the chain corresponds to 1–25; it reads MSPENQSSVSEFLLLGLPIRPEQQA. Residue asparagine 5 is glycosylated (N-linked (GlcNAc...) asparagine). A helical transmembrane segment spans residues 26–49; that stretch reads VFFALFLGMYLTTVLGNLLIMLLI. The Cytoplasmic segment spans residues 50 to 57; the sequence is QLDSHLHT. A helical membrane pass occupies residues 58 to 79; sequence PMYFFLSHLALTDISFSSVTVP. Residues 80 to 100 lie on the Extracellular side of the membrane; the sequence is KMLMNMQTQHLAVFYKGCISQ. Cysteine 97 and cysteine 189 form a disulfide bridge. Residues 101–120 traverse the membrane as a helical segment; the sequence is TYFFIFFADLDSFLITSMAY. Residues 121 to 139 lie on the Cytoplasmic side of the membrane; it reads DRYVAICHPLHYATIMTQS. The helical transmembrane segment at 140 to 158 threads the bilayer; the sequence is QCVMLVAGSWVIACACALL. Topologically, residues 159 to 196 are extracellular; the sequence is HTLLLAQLSFCADHIIPHYFCDLGALLKLSCSDTSLNQ. Residues 197–219 form a helical membrane-spanning segment; the sequence is LAIFTAALTAIMLPFLCILVSYG. Residues 220 to 236 are Cytoplasmic-facing; the sequence is HIGVTILQIPSTKGICK. Residues 237-259 traverse the membrane as a helical segment; the sequence is ALSTCGSHLSVVTIYYRTIIGLY. The Extracellular segment spans residues 260-272; that stretch reads FLPPSSNTNDKNI. The helical transmembrane segment at 273–292 threads the bilayer; it reads IASVIYTAVTPMLNPFIYSL. At 293–322 the chain is on the cytoplasmic side; the sequence is RNKDIKGALRKLLSRSGAVAHACNLNTLGG.

The protein belongs to the G-protein coupled receptor 1 family.

Its subcellular location is the cell membrane. In terms of biological role, odorant receptor. This chain is Olfactory receptor 1J1, found in Homo sapiens (Human).